Here is a 270-residue protein sequence, read N- to C-terminus: MTLKIAIAGAGGRMGRQLIQAVHSAEGVELGAAFERKGSSLVGTDAGELAGIGHLGVAVSDDLESQKDKFDLLIDFTRPEGTLEHIAFCVANNKKMVIGTTGFDENGKTAIKAASDKIAIVFASNFSVGVNLVFKLLEKAAKVMGDYCDIEVIEAHHRHKVDAPSGTALSMGEHIAKTLGRDLKTHGVFCREGITGERKRDEIGFSTIRASDVVGEHTVWFADIGERVEISHKASSRMTFANGAVRAGKWLENKANGLFDMTDVLDLNNL.

Residues 9–14 (GAGGRM) and glutamate 35 contribute to the NAD(+) site. An NADP(+)-binding site is contributed by arginine 36. Residues 99-101 (GTT) and 123-126 (ASNF) contribute to the NAD(+) site. The active-site Proton donor/acceptor is histidine 156. Position 157 (histidine 157) interacts with (S)-2,3,4,5-tetrahydrodipicolinate. The Proton donor role is filled by lysine 160. 166–167 (GT) provides a ligand contact to (S)-2,3,4,5-tetrahydrodipicolinate.

Belongs to the DapB family.

The protein resides in the cytoplasm. It catalyses the reaction (S)-2,3,4,5-tetrahydrodipicolinate + NAD(+) + H2O = (2S,4S)-4-hydroxy-2,3,4,5-tetrahydrodipicolinate + NADH + H(+). The enzyme catalyses (S)-2,3,4,5-tetrahydrodipicolinate + NADP(+) + H2O = (2S,4S)-4-hydroxy-2,3,4,5-tetrahydrodipicolinate + NADPH + H(+). Its pathway is amino-acid biosynthesis; L-lysine biosynthesis via DAP pathway; (S)-tetrahydrodipicolinate from L-aspartate: step 4/4. Functionally, catalyzes the conversion of 4-hydroxy-tetrahydrodipicolinate (HTPA) to tetrahydrodipicolinate. The polypeptide is 4-hydroxy-tetrahydrodipicolinate reductase (Haemophilus influenzae (strain PittGG)).